The sequence spans 145 residues: Bacilliredoxin SH1401 (145 aa).

This sequence belongs to the bacilliredoxin family.

This is Bacilliredoxin SH1401 from Staphylococcus haemolyticus (strain JCSC1435).